The chain runs to 438 residues: GTPase Der (438 aa).

2 EngA-type G domains span residues 4–168 and 177–352; these read PLVT…KSEG and IKIA…DNYS. GTP-binding positions include 10–17, 57–61, 120–123, 183–190, 230–234, and 295–298; these read GRPNVGKS, DTGGI, NKID, GKPNVGKS, DTAGL, and NKWD. The KH-like domain occupies 353–437; that stretch reads KRIATGVLND…GIKMIFKERK (85 aa).

This sequence belongs to the TRAFAC class TrmE-Era-EngA-EngB-Septin-like GTPase superfamily. EngA (Der) GTPase family. In terms of assembly, associates with the 50S ribosomal subunit.

Its function is as follows. GTPase that plays an essential role in the late steps of ribosome biogenesis. This chain is GTPase Der, found in Clostridium acetobutylicum (strain ATCC 824 / DSM 792 / JCM 1419 / IAM 19013 / LMG 5710 / NBRC 13948 / NRRL B-527 / VKM B-1787 / 2291 / W).